The following is an 898-amino-acid chain: Alanine--tRNA ligase (898 aa).

Residues histidine 582, histidine 586, cysteine 685, and histidine 689 each coordinate Zn(2+).

This sequence belongs to the class-II aminoacyl-tRNA synthetase family. Zn(2+) serves as cofactor.

Its subcellular location is the cytoplasm. It carries out the reaction tRNA(Ala) + L-alanine + ATP = L-alanyl-tRNA(Ala) + AMP + diphosphate. Catalyzes the attachment of alanine to tRNA(Ala) in a two-step reaction: alanine is first activated by ATP to form Ala-AMP and then transferred to the acceptor end of tRNA(Ala). Also edits incorrectly charged Ser-tRNA(Ala) and Gly-tRNA(Ala) via its editing domain. In Mycolicibacterium vanbaalenii (strain DSM 7251 / JCM 13017 / BCRC 16820 / KCTC 9966 / NRRL B-24157 / PYR-1) (Mycobacterium vanbaalenii), this protein is Alanine--tRNA ligase.